A 223-amino-acid chain; its full sequence is Thylakoid lumenal 15.0 kDa protein 2, chloroplastic (223 aa).

The protein localises to the plastid. It is found in the chloroplast thylakoid lumen. In Arabidopsis thaliana (Mouse-ear cress), this protein is Thylakoid lumenal 15.0 kDa protein 2, chloroplastic.